Reading from the N-terminus, the 219-residue chain is GTP-binding nuclear protein GSP1/CNR1 (219 aa).

The residue at position 2 (Ser-2) is an N-acetylserine. Ser-2 carries the post-translational modification Phosphoserine. The 165-residue stretch at 9–173 (EVPTFKLVLV…LWLARKLAGN (165 aa)) folds into the Small GTPase Ran-type domain. 20 to 27 (DGGTGKTT) lines the GTP pocket. Positions 39–47 (KKYIATIGV) are switch-I. GTP contacts are provided by residues Gly-70, 124-127 (NKVD), and 152-154 (SAK). Residues 70–86 (GQEKFGGLRDGYYINAQ) form a switch-II region.

This sequence belongs to the small GTPase superfamily. Ran family. As to quaternary structure, found in a nuclear export complex with RanGTP, exportin and pre-miRNA. Forms a complex with YRB1. Interacts with BUD5, CEX1, RRP12, SRM1, and DIS3/RRP44.

It localises to the nucleus. In terms of biological role, GTP-binding protein involved in nucleocytoplasmic transport. Required for the import of protein into the nucleus and also for RNA export. Essential for cell viability. By analogy with Ras, Ran may be activated when GTP is exchanged for bound GDP by RCC1 and inactivated when GTP is hydrolyzed by Ran upon activation by RanGAP1. The protein is GTP-binding nuclear protein GSP1/CNR1 (GSP1) of Saccharomyces cerevisiae (strain ATCC 204508 / S288c) (Baker's yeast).